Here is a 602-residue protein sequence, read N- to C-terminus: Glutamine--fructose-6-phosphate aminotransferase [isomerizing] (602 aa).

The active-site Nucleophile; for GATase activity is Cys-2. The region spanning 2-219 (CGIIGYIGDR…DGEYAILTKD (218 aa)) is the Glutamine amidotransferase type-2 domain. 2 consecutive SIS domains span residues 280–420 (VAEE…VLGT) and 453–592 (LAET…PDKP). Lys-597 acts as the For Fru-6P isomerization activity in catalysis.

In terms of assembly, homodimer.

Its subcellular location is the cytoplasm. The enzyme catalyses D-fructose 6-phosphate + L-glutamine = D-glucosamine 6-phosphate + L-glutamate. Its function is as follows. Catalyzes the first step in hexosamine metabolism, converting fructose-6P into glucosamine-6P using glutamine as a nitrogen source. In Thermococcus kodakarensis (strain ATCC BAA-918 / JCM 12380 / KOD1) (Pyrococcus kodakaraensis (strain KOD1)), this protein is Glutamine--fructose-6-phosphate aminotransferase [isomerizing].